The sequence spans 453 residues: Tubulin delta chain (453 aa).

A GTP-binding site is contributed by 143–149 (AGGTGSG).

Belongs to the tubulin family. Found in a complex with TEDC1, TEDC2, TUBE1 and TUBD1.

Its subcellular location is the nucleus. It is found in the cytoplasm. The protein localises to the cytoskeleton. The protein resides in the microtubule organizing center. It localises to the centrosome. Its subcellular location is the centriole. It is found in the cell projection. The protein localises to the cilium. Functionally, acts as a positive regulator of hedgehog signaling and regulates ciliary function. This is Tubulin delta chain (TUBD1) from Macaca fascicularis (Crab-eating macaque).